Here is a 158-residue protein sequence, read N- to C-terminus: Transcriptional repressor NrdR (158 aa).

A zinc finger lies at cysteine 3–cysteine 34. The 91-residue stretch at isoleucine 49–threonine 139 folds into the ATP-cone domain.

Belongs to the NrdR family. Zn(2+) is required as a cofactor.

Negatively regulates transcription of bacterial ribonucleotide reductase nrd genes and operons by binding to NrdR-boxes. In Thermoanaerobacter pseudethanolicus (strain ATCC 33223 / 39E) (Clostridium thermohydrosulfuricum), this protein is Transcriptional repressor NrdR.